Consider the following 274-residue polypeptide: NADPH-dependent 7-cyano-7-deazaguanine reductase (274 aa).

Residue 80 to 82 (VES) participates in substrate binding. Residue 82–83 (SK) coordinates NADPH. The active-site Thioimide intermediate is the C181. The active-site Proton donor is D188. 220 to 221 (HE) is a binding site for substrate. 249–250 (RG) serves as a coordination point for NADPH.

The protein belongs to the GTP cyclohydrolase I family. QueF type 2 subfamily. Homodimer.

The protein localises to the cytoplasm. It carries out the reaction 7-aminomethyl-7-carbaguanine + 2 NADP(+) = 7-cyano-7-deazaguanine + 2 NADPH + 3 H(+). It participates in tRNA modification; tRNA-queuosine biosynthesis. In terms of biological role, catalyzes the NADPH-dependent reduction of 7-cyano-7-deazaguanine (preQ0) to 7-aminomethyl-7-deazaguanine (preQ1). This Paraburkholderia phymatum (strain DSM 17167 / CIP 108236 / LMG 21445 / STM815) (Burkholderia phymatum) protein is NADPH-dependent 7-cyano-7-deazaguanine reductase.